A 956-amino-acid polypeptide reads, in one-letter code: Plasma membrane ATPase 1 (956 aa).

Topologically, residues 1–65 (MAEKPEVLDA…EKKESKFLKF (65 aa)) are cytoplasmic. The chain crosses the membrane as a helical span at residues 66-85 (LGFMWNPLSWVMEAAAIMAI). Residues 86–97 (ALANGGGKPPDW) lie on the Extracellular side of the membrane. A helical transmembrane segment spans residues 98 to 118 (QDFVGIITLLIINSTISFIEE). Over 119–247 (NNAGNAAAAL…GHFQKVLTAI (129 aa)) the chain is Cytoplasmic. Residues 248–268 (GNFCICSIAVGMIIEIIVMYP) traverse the membrane as a helical segment. Over 269-277 (IQHRKYRPG) the chain is Extracellular. The helical transmembrane segment at 278–295 (IDNLLVLLIGGIPIAMPT) threads the bilayer. Residues 296–646 (VLSVTMAIGS…LTSRAIFQRM (351 aa)) are Cytoplasmic-facing. Asp-333 functions as the 4-aspartylphosphate intermediate in the catalytic mechanism. Residues Asp-592 and Asp-596 each coordinate Mg(2+). Residues 647 to 666 (KNYTIYAVSITIRIVLGFML) form a helical membrane-spanning segment. Over 667–674 (LALIWKFD) the chain is Extracellular. A helical transmembrane segment spans residues 675 to 697 (FPPFMVLIIAILNDGTIMTISKD). Topologically, residues 698–713 (RVKPSPLPDSWKLAEI) are cytoplasmic. The chain crosses the membrane as a helical span at residues 714–734 (FTTGVVLGGYLAMMTVIFFWA). Residues 735–759 (AYKTNFFPRIFGVSTLEKTATDDFR) are Extracellular-facing. A helical membrane pass occupies residues 760–780 (KLASAIYLQVSTISQALIFVT). The Cytoplasmic portion of the chain corresponds to 781 to 792 (RSRSWSFVERPG). Residues 793–813 (LLLVFAFFVAQLVATLIAVYA) form a helical membrane-spanning segment. The Extracellular segment spans residues 814–821 (NWSFAAIE). The helical transmembrane segment at 822 to 842 (GIGWGWAGVIWLYNIVTYIPL) threads the bilayer. The Cytoplasmic segment spans residues 843-956 (DLIKFLIRYA…IETIQQSYTV (114 aa)).

The protein belongs to the cation transport ATPase (P-type) (TC 3.A.3) family. Type IIIA subfamily. Possibly exists as a homodimer or a homotrimer.

It is found in the cell membrane. The enzyme catalyses ATP + H2O + H(+)(in) = ADP + phosphate + 2 H(+)(out). Its function is as follows. The plasma membrane ATPase of plants and fungi is a hydrogen ion pump. The proton gradient it generates drives the active transport of nutrients by H(+)-symport. The resulting external acidification and/or internal alkinization may mediate growth responses. This chain is Plasma membrane ATPase 1 (LHA1), found in Solanum lycopersicum (Tomato).